Reading from the N-terminus, the 711-residue chain is Protein ACTIVITY OF BC1 COMPLEX KINASE 3, chloroplastic (711 aa).

A chloroplast-targeting transit peptide spans 1–42 (MSLVVGQSLGLTLVGDGLSLRNSKINVGKSKFFSVNRRRLAR). The Protein kinase domain occupies 216–546 (SVSPEPIAAA…IELLFKDGKF (331 aa)). ATP contacts are provided by residues 222-230 (IAAASLGQV) and Lys-245. Asp-379 functions as the Proton acceptor in the catalytic mechanism.

Belongs to the protein kinase superfamily. ADCK protein kinase family. In terms of assembly, interacts with ABC1K1 in plastoglobules (PG). Interacts with PGM48.

The protein localises to the plastid. Its subcellular location is the chloroplast. It is found in the plastoglobule. It catalyses the reaction L-seryl-[protein] + ATP = O-phospho-L-seryl-[protein] + ADP + H(+). It carries out the reaction L-threonyl-[protein] + ATP = O-phospho-L-threonyl-[protein] + ADP + H(+). Its function is as follows. Kinase that can phosphorylate the tocopherol cyclase VTE1, a key enzyme of tocopherol (vitamin E) metabolism and involved in the recycling of oxidated alpha-tocopherol quinone, possibly stabilizing it at plastoglobules. Also regulates membrane prenylquinone composition. Required for photooxidative stress responses to prevent photosystem II core and chlorophyll degradations. Together with ABC1K1, contributes to plastoglobule (PG) function in prenyl-lipid metabolism, stress response, and thylakoid remodeling. Promotes photodamage of chloroplasts under continuous red light, thus working in opposition to ABC1K1. In Arabidopsis thaliana (Mouse-ear cress), this protein is Protein ACTIVITY OF BC1 COMPLEX KINASE 3, chloroplastic.